The primary structure comprises 223 residues: Urease accessory protein UreF (223 aa).

It belongs to the UreF family. As to quaternary structure, ureD, UreF and UreG form a complex that acts as a GTP-hydrolysis-dependent molecular chaperone, activating the urease apoprotein by helping to assemble the nickel containing metallocenter of UreC. The UreE protein probably delivers the nickel.

The protein localises to the cytoplasm. Its function is as follows. Required for maturation of urease via the functional incorporation of the urease nickel metallocenter. This chain is Urease accessory protein UreF, found in Rhizobium etli (strain CIAT 652).